Consider the following 219-residue polypeptide: tRNA (guanine-N(7)-)-methyltransferase (219 aa).

The S-adenosyl-L-methionine site is built by Glu-44, Asp-69, Glu-102, and Asn-125. Residues Lys-129 and Asp-161 each coordinate substrate.

The protein belongs to the class I-like SAM-binding methyltransferase superfamily. TrmB family.

The catalysed reaction is guanosine(46) in tRNA + S-adenosyl-L-methionine = N(7)-methylguanosine(46) in tRNA + S-adenosyl-L-homocysteine. It participates in tRNA modification; N(7)-methylguanine-tRNA biosynthesis. Catalyzes the formation of N(7)-methylguanine at position 46 (m7G46) in tRNA. This chain is tRNA (guanine-N(7)-)-methyltransferase, found in Clostridium perfringens (strain SM101 / Type A).